The chain runs to 91 residues: Small ribosomal subunit protein uS19 (91 aa).

It belongs to the universal ribosomal protein uS19 family.

In terms of biological role, protein S19 forms a complex with S13 that binds strongly to the 16S ribosomal RNA. The polypeptide is Small ribosomal subunit protein uS19 (Azoarcus sp. (strain BH72)).